Here is a 208-residue protein sequence, read N- to C-terminus: MTNVLFIKANGLPAERSVSVALYEIFLAEYKKSHPDDNVTELDLFEADLPYYDVTMMSGLHKEVAGETLTPEEKRLADIANGYLDQFLAADKIVMAFPLWNFSIPAQFLTYLFYLNQAGKTFKYTANGPIGLVTDKKIALLNARGGIYSDGPLQSFEMSLNYVKNVLAHFGISEPEMVIVEGHNAKPDQAKDIISAGAKEAAELAKIF.

Residue 17–19 (SVS) participates in FMN binding.

This sequence belongs to the azoreductase type 1 family. Homodimer. FMN serves as cofactor.

The catalysed reaction is 2 a quinone + NADH + H(+) = 2 a 1,4-benzosemiquinone + NAD(+). It carries out the reaction N,N-dimethyl-1,4-phenylenediamine + anthranilate + 2 NAD(+) = 2-(4-dimethylaminophenyl)diazenylbenzoate + 2 NADH + 2 H(+). Its function is as follows. Quinone reductase that provides resistance to thiol-specific stress caused by electrophilic quinones. Also exhibits azoreductase activity. Catalyzes the reductive cleavage of the azo bond in aromatic azo compounds to the corresponding amines. The chain is FMN-dependent NADH:quinone oxidoreductase 1 from Listeria innocua serovar 6a (strain ATCC BAA-680 / CLIP 11262).